The sequence spans 432 residues: E3 ubiquitin-protein ligase RNF135 (432 aa).

The RING-type zinc finger occupies 21-63 (CIICQGLLDWPATLPCGHSFCRHCLEALWGARDARRWACPTCR). Residues 95-121 (GSDPAHCPCPGSSSLSSAAARPRRRPE) are disordered. Positions 102–114 (PCPGSSSLSSAAA) are enriched in low complexity. Coiled-coil stretches lie at residues 121-156 (ELQRVAVEKSITEVAQELTELVEHLVDIVRSLQNQR) and 191-216 (DTAAGKIRDILHDLEEIQEKLQESVT). The B30.2/SPRY domain occupies 241-432 (PDQSHPALRR…NYLIIKQVKV (192 aa)).

As to quaternary structure, homodimer. Interacts (homodimer) with RIGI (double-stranded RNA-bound oligomeric form); involved in both RIGI ubiquitination, oligomerization into filaments associated with viral RNAs and the bridging of these filaments. Interacts with UBE2D3 and UBE2N; E2 ubiquitin ligases involved in RNF135-mediated ubiquitination of RIGI and activation of the RIG-I signaling pathway. Interacts with PCBP2. Post-translationally, (Microbial infection) Cleaved and inactivated by hepatitis C virus NS3/NS4A. Expressed in skeletal muscle, spleen, kidney, placenta, prostate, stomach, thyroid and tongue. Also weakly expressed in heart, thymus, liver and lung.

The protein resides in the cytoplasm. The protein localises to the stress granule. It catalyses the reaction S-ubiquitinyl-[E2 ubiquitin-conjugating enzyme]-L-cysteine + [acceptor protein]-L-lysine = [E2 ubiquitin-conjugating enzyme]-L-cysteine + N(6)-ubiquitinyl-[acceptor protein]-L-lysine.. It participates in protein modification; protein ubiquitination. In terms of biological role, E2-dependent E3 ubiquitin-protein ligase that functions as a RIGI coreceptor in the sensing of viral RNAs in cell cytoplasm and the activation of the antiviral innate immune response. Together with the UBE2D3, UBE2N and UB2V1 E2 ligases, catalyzes the 'Lys-63'-linked polyubiquitination of RIGI oligomerized on viral RNAs, an essential step in the activation of the RIG-I signaling pathway. Through a ubiquitin-independent parallel mechanism, which consists in bridging RIGI filaments forming on longer viral RNAs, further activates the RIG-I signaling pathway. This second mechanism that synergizes with the ubiquitin-dependent one would thereby allow an RNA length-dependent regulation of the RIG-I signaling pathway. Associated with the E2 ligase UBE2N, also constitutively synthesizes unanchored 'Lys-63'-linked polyubiquitin chains that may also activate the RIG-I signaling pathway. The polypeptide is E3 ubiquitin-protein ligase RNF135 (Homo sapiens (Human)).